A 510-amino-acid polypeptide reads, in one-letter code: GMP synthase [glutamine-hydrolyzing] (510 aa).

Residues 5–195 (LVLVIDFGGQ…LFKICGLKED (191 aa)) form the Glutamine amidotransferase type-1 domain. Cysteine 82 serves as the catalytic Nucleophile. Active-site residues include histidine 169 and glutamate 171. One can recognise a GMPS ATP-PPase domain in the interval 196–385 (WSMSSFAKEK…LGIPHKLVWR (190 aa)). 223–229 (SGGVDSS) contributes to the ATP binding site.

In terms of assembly, homodimer.

It carries out the reaction XMP + L-glutamine + ATP + H2O = GMP + L-glutamate + AMP + diphosphate + 2 H(+). It functions in the pathway purine metabolism; GMP biosynthesis; GMP from XMP (L-Gln route): step 1/1. In terms of biological role, catalyzes the synthesis of GMP from XMP. The sequence is that of GMP synthase [glutamine-hydrolyzing] from Clostridium acetobutylicum (strain ATCC 824 / DSM 792 / JCM 1419 / IAM 19013 / LMG 5710 / NBRC 13948 / NRRL B-527 / VKM B-1787 / 2291 / W).